Consider the following 132-residue polypeptide: Small ribosomal subunit protein uS8 (132 aa).

It belongs to the universal ribosomal protein uS8 family. Part of the 30S ribosomal subunit. Contacts proteins S5 and S12.

In terms of biological role, one of the primary rRNA binding proteins, it binds directly to 16S rRNA central domain where it helps coordinate assembly of the platform of the 30S subunit. The protein is Small ribosomal subunit protein uS8 of Xylella fastidiosa (strain M12).